We begin with the raw amino-acid sequence, 114 residues long: T cell receptor beta variable 6-6 (114 aa).

A signal peptide spans 1–21 (MSISLLCCAAFPLLWAGPVNA). The 93-residue stretch at 22–114 (GVTQTPKFRI…TSVYFCASSY (93 aa)) folds into the Ig-like domain. C42 and C110 are disulfide-bonded. The N-linked (GlcNAc...) asparagine glycan is linked to N84.

As to quaternary structure, alpha-beta TR is a heterodimer composed of an alpha and beta chain; disulfide-linked. The alpha-beta TR is associated with the transmembrane signaling CD3 coreceptor proteins to form the TR-CD3 (TcR or TCR). The assembly of alpha-beta TR heterodimers with CD3 occurs in the endoplasmic reticulum where a single alpha-beta TR heterodimer associates with one CD3D-CD3E heterodimer, one CD3G-CD3E heterodimer and one CD247 homodimer forming a stable octameric structure. CD3D-CD3E and CD3G-CD3E heterodimers preferentially associate with TR alpha and TR beta chains, respectively. The association of the CD247 homodimer is the last step of TcR assembly in the endoplasmic reticulum and is required for transport to the cell surface.

The protein localises to the cell membrane. In terms of biological role, v region of the variable domain of T cell receptor (TR) beta chain that participates in the antigen recognition. Alpha-beta T cell receptors are antigen specific receptors which are essential to the immune response and are present on the cell surface of T lymphocytes. Recognize peptide-major histocompatibility (MH) (pMH) complexes that are displayed by antigen presenting cells (APC), a prerequisite for efficient T cell adaptive immunity against pathogens. Binding of alpha-beta TR to pMH complex initiates TR-CD3 clustering on the cell surface and intracellular activation of LCK that phosphorylates the ITAM motifs of CD3G, CD3D, CD3E and CD247 enabling the recruitment of ZAP70. In turn ZAP70 phosphorylates LAT, which recruits numerous signaling molecules to form the LAT signalosome. The LAT signalosome propagates signal branching to three major signaling pathways, the calcium, the mitogen-activated protein kinase (MAPK) kinase and the nuclear factor NF-kappa-B (NF-kB) pathways, leading to the mobilization of transcription factors that are critical for gene expression and essential for T cell growth and differentiation. The T cell repertoire is generated in the thymus, by V-(D)-J rearrangement. This repertoire is then shaped by intrathymic selection events to generate a peripheral T cell pool of self-MH restricted, non-autoaggressive T cells. Post-thymic interaction of alpha-beta TR with the pMH complexes shapes TR structural and functional avidity. The polypeptide is T cell receptor beta variable 6-6 (Homo sapiens (Human)).